Consider the following 316-residue polypeptide: 1-phosphofructokinase (316 aa).

ATP-binding positions include 225 to 230 (SMGAGG) and 256 to 257 (GD). Residue aspartate 257 is the Proton acceptor of the active site.

Belongs to the carbohydrate kinase PfkB family.

It carries out the reaction beta-D-fructose 1-phosphate + ATP = beta-D-fructose 1,6-bisphosphate + ADP + H(+). In terms of biological role, catalyzes the ATP-dependent phosphorylation of fructose-l-phosphate to fructose-l,6-bisphosphate. In Rhodobacter capsulatus (Rhodopseudomonas capsulata), this protein is 1-phosphofructokinase.